Here is a 101-residue protein sequence, read N- to C-terminus: Aspartyl/glutamyl-tRNA(Asn/Gln) amidotransferase subunit C (101 aa).

The protein belongs to the GatC family. Heterotrimer of A, B and C subunits.

The catalysed reaction is L-glutamyl-tRNA(Gln) + L-glutamine + ATP + H2O = L-glutaminyl-tRNA(Gln) + L-glutamate + ADP + phosphate + H(+). It catalyses the reaction L-aspartyl-tRNA(Asn) + L-glutamine + ATP + H2O = L-asparaginyl-tRNA(Asn) + L-glutamate + ADP + phosphate + 2 H(+). Functionally, allows the formation of correctly charged Asn-tRNA(Asn) or Gln-tRNA(Gln) through the transamidation of misacylated Asp-tRNA(Asn) or Glu-tRNA(Gln) in organisms which lack either or both of asparaginyl-tRNA or glutaminyl-tRNA synthetases. The reaction takes place in the presence of glutamine and ATP through an activated phospho-Asp-tRNA(Asn) or phospho-Glu-tRNA(Gln). This is Aspartyl/glutamyl-tRNA(Asn/Gln) amidotransferase subunit C from Salinispora tropica (strain ATCC BAA-916 / DSM 44818 / JCM 13857 / NBRC 105044 / CNB-440).